Consider the following 239-residue polypeptide: MQKLELLYEGKAKRIYRTESADMVWVEYKDSATAFNGEKKETITGKGRLNNEITTLLFRKLQEVGIKTHFVEKLSETEQLVKKVSIIPLEVVTRNVLAGSLSKRLGMEEGTVLAEPIVEFYFKDDDLGDPLVTEDHIRVLNVASPEQVSVLRDMALQINQVLIDHFASCRVRLVDFKLEFGVTDEGAIILADEISPDTCRLWDETSNEKFDKDVFRRDLGNLTDAYEEILKRLGGISHV.

Belongs to the SAICAR synthetase family.

It carries out the reaction 5-amino-1-(5-phospho-D-ribosyl)imidazole-4-carboxylate + L-aspartate + ATP = (2S)-2-[5-amino-1-(5-phospho-beta-D-ribosyl)imidazole-4-carboxamido]succinate + ADP + phosphate + 2 H(+). It participates in purine metabolism; IMP biosynthesis via de novo pathway; 5-amino-1-(5-phospho-D-ribosyl)imidazole-4-carboxamide from 5-amino-1-(5-phospho-D-ribosyl)imidazole-4-carboxylate: step 1/2. In Bacillus thuringiensis subsp. konkukian (strain 97-27), this protein is Phosphoribosylaminoimidazole-succinocarboxamide synthase.